Here is a 536-residue protein sequence, read N- to C-terminus: Phosphoenolpyruvate carboxykinase (ATP) (536 aa).

R61, Y195, and K201 together coordinate substrate. ATP contacts are provided by residues K201, H220, and 236-244; that span reads GLSGTGKTT. Positions 201 and 220 each coordinate Mn(2+). D257 provides a ligand contact to Mn(2+). ATP-binding residues include E285, R322, and T447. Residue R322 participates in substrate binding.

This sequence belongs to the phosphoenolpyruvate carboxykinase (ATP) family. It depends on Mn(2+) as a cofactor.

The protein resides in the cytoplasm. The enzyme catalyses oxaloacetate + ATP = phosphoenolpyruvate + ADP + CO2. The protein operates within carbohydrate biosynthesis; gluconeogenesis. Its function is as follows. Involved in the gluconeogenesis. Catalyzes the conversion of oxaloacetate (OAA) to phosphoenolpyruvate (PEP) through direct phosphoryl transfer between the nucleoside triphosphate and OAA. The protein is Phosphoenolpyruvate carboxykinase (ATP) of Agrobacterium fabrum (strain C58 / ATCC 33970) (Agrobacterium tumefaciens (strain C58)).